The sequence spans 435 residues: Serine--tRNA ligase (435 aa).

237-239 (TAE) serves as a coordination point for L-serine. An ATP-binding site is contributed by 268 to 270 (RSE). Glu-291 lines the L-serine pocket. Residue 355–358 (EISS) participates in ATP binding. L-serine is bound at residue Ser-390.

This sequence belongs to the class-II aminoacyl-tRNA synthetase family. Type-1 seryl-tRNA synthetase subfamily. As to quaternary structure, homodimer. The tRNA molecule binds across the dimer.

Its subcellular location is the cytoplasm. The catalysed reaction is tRNA(Ser) + L-serine + ATP = L-seryl-tRNA(Ser) + AMP + diphosphate + H(+). It catalyses the reaction tRNA(Sec) + L-serine + ATP = L-seryl-tRNA(Sec) + AMP + diphosphate + H(+). The protein operates within aminoacyl-tRNA biosynthesis; selenocysteinyl-tRNA(Sec) biosynthesis; L-seryl-tRNA(Sec) from L-serine and tRNA(Sec): step 1/1. Catalyzes the attachment of serine to tRNA(Ser). Is also able to aminoacylate tRNA(Sec) with serine, to form the misacylated tRNA L-seryl-tRNA(Sec), which will be further converted into selenocysteinyl-tRNA(Sec). The polypeptide is Serine--tRNA ligase (Lactobacillus delbrueckii subsp. bulgaricus (strain ATCC BAA-365 / Lb-18)).